The sequence spans 121 residues: MKWWKLSGQILLLFCFAWTGEWIAKQAHLPVPGSIIGIFLLLISLKFNLVKKEWIQDGADFLLKELILFFIPSAVAVIRYKDTLSQYGIDLILIIMISTLCVTLVTGLLTELLLKRKGSVQ.

4 helical membrane passes run 3–23 (WWKL…GEWI), 30–50 (PVPG…FNLV), 58–78 (GADF…VAVI), and 89–109 (IDLI…TGLL).

Belongs to the CidA/LrgA family. CidA subfamily.

It localises to the cell membrane. In terms of biological role, increases the activity of extracellular murein hydrolases possibly by mediating their export via hole formation. Inhibited by the antiholin-like proteins LrgAB. In an unstressed cell, the LrgAB products probably inhibit the function of the CidA protein. When a cell is stressed by the addition of antibiotics or by other factors in the environment, CidA possibly oligomerizes within the bacterial cell membrane, creating lesions that disrupt the proton motive force, which in turn results in loss of cell viability. These lesions are also hypothesized to regulate the subsequent cell lysis by either allowing the murein hydrolases access to the cell wall substrate and/or regulating their activity by a possible change in the cell wall pH that results from loss of membrane potential. This Bacillus cereus (strain ATCC 10987 / NRS 248) protein is Holin-like protein CidA.